Here is a 51-residue protein sequence, read N- to C-terminus: Insulin-2 (51 aa).

Disulfide bonds link cysteine 8–cysteine 37, cysteine 20–cysteine 50, and cysteine 36–cysteine 41.

This sequence belongs to the insulin family. In terms of assembly, heterodimer of a B chain and an A chain linked by two disulfide bonds.

The protein resides in the secreted. Its function is as follows. Insulin decreases blood glucose concentration. It increases cell permeability to monosaccharides, amino acids and fatty acids. It accelerates glycolysis, the pentose phosphate cycle, and glycogen synthesis in liver. This is Insulin-2 from Katsuwonus pelamis (Skipjack tuna).